Consider the following 432-residue polypeptide: Adenylosuccinate synthetase (432 aa).

Residues 13-19 (GDEGKGK) and 41-43 (GHT) each bind GTP. Aspartate 14 acts as the Proton acceptor in catalysis. Residues aspartate 14 and glycine 41 each contribute to the Mg(2+) site. Residues 14 to 17 (DEGK), 39 to 42 (NAGH), threonine 130, arginine 144, glutamine 225, threonine 240, and arginine 304 contribute to the IMP site. Residue histidine 42 is the Proton donor of the active site. 300–306 (ATTGRRR) lines the substrate pocket. GTP is bound by residues arginine 306, 332–334 (KLD), and 415–417 (STG).

This sequence belongs to the adenylosuccinate synthetase family. Homodimer. The cofactor is Mg(2+).

It is found in the cytoplasm. The enzyme catalyses IMP + L-aspartate + GTP = N(6)-(1,2-dicarboxyethyl)-AMP + GDP + phosphate + 2 H(+). Its pathway is purine metabolism; AMP biosynthesis via de novo pathway; AMP from IMP: step 1/2. Plays an important role in the de novo pathway of purine nucleotide biosynthesis. Catalyzes the first committed step in the biosynthesis of AMP from IMP. This chain is Adenylosuccinate synthetase, found in Salmonella choleraesuis (strain SC-B67).